Consider the following 609-residue polypeptide: Aspartate--tRNA(Asp/Asn) ligase (609 aa).

E175 is an L-aspartate binding site. Positions 199-202 (QQFK) are aspartate. L-aspartate contacts are provided by R221 and H468. 221–223 (RDE) contributes to the ATP binding site. An ATP-binding site is contributed by E502. L-aspartate is bound at residue R509. 554–557 (GIDR) contributes to the ATP binding site.

Belongs to the class-II aminoacyl-tRNA synthetase family. Type 1 subfamily. As to quaternary structure, homodimer.

The protein localises to the cytoplasm. The enzyme catalyses tRNA(Asx) + L-aspartate + ATP = L-aspartyl-tRNA(Asx) + AMP + diphosphate. Aspartyl-tRNA synthetase with relaxed tRNA specificity since it is able to aspartylate not only its cognate tRNA(Asp) but also tRNA(Asn). Reaction proceeds in two steps: L-aspartate is first activated by ATP to form Asp-AMP and then transferred to the acceptor end of tRNA(Asp/Asn). The polypeptide is Aspartate--tRNA(Asp/Asn) ligase (Caulobacter sp. (strain K31)).